The following is a 208-amino-acid chain: Outer-membrane lipoprotein carrier protein (208 aa).

The first 24 residues, 1–24, serve as a signal peptide directing secretion; sequence MRMNIVQKILSATCFALLPLLAHA.

The protein belongs to the LolA family. As to quaternary structure, monomer.

Its subcellular location is the periplasm. Participates in the translocation of lipoproteins from the inner membrane to the outer membrane. Only forms a complex with a lipoprotein if the residue after the N-terminal Cys is not an aspartate (The Asp acts as a targeting signal to indicate that the lipoprotein should stay in the inner membrane). The polypeptide is Outer-membrane lipoprotein carrier protein (Dechloromonas aromatica (strain RCB)).